A 629-amino-acid chain; its full sequence is Ribosomal protein S6 kinase 2 beta (629 aa).

In terms of domain architecture, Protein kinase 1 spans 62–321 (FVLLKVLGQG…AEELKRHPFF (260 aa)). Residues 68 to 76 (LGQGSFGKV) and K94 contribute to the ATP site. The Proton acceptor role is filled by D187. Phosphoserine is present on S221. The AGC-kinase C-terminal domain maps to 322–391 (STIDWNKLYR…VAPVLVEEDA (70 aa)). T359 carries the post-translational modification Phosphothreonine. A Phosphoserine modification is found at S363. Residue S380 is modified to Phosphoserine; by autocatalysis. In terms of domain architecture, Protein kinase 2 spans 416–629 (YTVRETIGVG…PEEILARIGS (214 aa)). ATP contacts are provided by residues 422–430 (IGVGSYSVC) and K445. D533 functions as the Proton acceptor in the catalytic mechanism. T571 bears the Phosphothreonine mark.

This sequence belongs to the protein kinase superfamily. AGC Ser/Thr protein kinase family. S6 kinase subfamily. It depends on Mg(2+) as a cofactor. Autophosphorylated on Ser-380, as part of the activation process.

The enzyme catalyses L-seryl-[protein] + ATP = O-phospho-L-seryl-[protein] + ADP + H(+). It catalyses the reaction L-threonyl-[protein] + ATP = O-phospho-L-threonyl-[protein] + ADP + H(+). Activated by multiple phosphorylations on threonine and serine residues. Its function is as follows. Serine/threonine kinase that may play a role in mediating the growth-factor and stress induced activation of transcription. This Xenopus laevis (African clawed frog) protein is Ribosomal protein S6 kinase 2 beta.